Here is a 219-residue protein sequence, read N- to C-terminus: Probable glucosamine 6-phosphate N-acetyltransferase (219 aa).

The 157-residue stretch at 42–198 (MKVRPLKDTD…EGPTLKRNAT (157 aa)) folds into the N-acetyltransferase domain. Residues Thr64, 111–114 (KFIH), and 123–125 (EDV) contribute to the substrate site. 133-138 (GKQLGK) is a binding site for acetyl-CoA. Substrate is bound by residues 154 to 155 (YK) and Arg186.

It belongs to the acetyltransferase family. GNA1 subfamily.

The catalysed reaction is D-glucosamine 6-phosphate + acetyl-CoA = N-acetyl-D-glucosamine 6-phosphate + CoA + H(+). It participates in nucleotide-sugar biosynthesis; UDP-N-acetyl-alpha-D-glucosamine biosynthesis; N-acetyl-alpha-D-glucosamine 1-phosphate from alpha-D-glucosamine 6-phosphate (route I): step 1/2. This is Probable glucosamine 6-phosphate N-acetyltransferase from Drosophila melanogaster (Fruit fly).